Here is a 299-residue protein sequence, read N- to C-terminus: Peroxisomal biogenesis factor 19 (299 aa).

N-acetylalanine is present on alanine 2. Residues 2–56 are docking to the peroxisome membrane and binding to PEX3; sequence AAAEGGCGAGVEADRELEELLESALDDFDKAKPSPAPSPTISAPDASGPQKRSPG. Residues 2–91 are necessary for PEX19 function on peroxisome biogenesis; sequence AAAEGGCGAG…QATAEFEKAM (90 aa). The disordered stretch occupies residues 25-63; sequence ALDDFDKAKPSPAPSPTISAPDASGPQKRSPGDTAKDAL. Phosphoserine is present on residues serine 35, serine 39, serine 54, and serine 66. Threonine 236 is modified (phosphothreonine). Cysteine methyl ester is present on cysteine 296. Cysteine 296 carries S-farnesyl cysteine lipidation. A propeptide spans 297-299 (removed in mature form); sequence LIM.

Belongs to the peroxin-19 family. As to quaternary structure, interacts with a broad range of peroxisomal membrane proteins, including PEX3, PEX10, PEX11A, PEX11B, PEX12, PEX13, PEX14 and PEX16, PXMP2/PMP22, PXMP4/PMP24, SLC25A17/PMP34, ABCD1/ALDP, ABCD2/ALDRP, and ABCD3/PMP70. Also interacts with the tumor suppressor CDKN2A/p19ARF.

It localises to the cytoplasm. Its subcellular location is the peroxisome membrane. Functionally, necessary for early peroxisomal biogenesis. Acts both as a cytosolic chaperone and as an import receptor for peroxisomal membrane proteins (PMPs). Binds and stabilizes newly synthesized PMPs in the cytoplasm by interacting with their hydrophobic membrane-spanning domains, and targets them to the peroxisome membrane by binding to the integral membrane protein PEX3. Excludes CDKN2A from the nucleus and prevents its interaction with MDM2, which results in active degradation of TP53. This chain is Peroxisomal biogenesis factor 19 (Pex19), found in Rattus norvegicus (Rat).